Consider the following 348-residue polypeptide: Tripartite motif-containing protein 16-like protein (348 aa).

The 199-residue stretch at 139–337 (YWTSKPEPST…RIVDLGEEPE (199 aa)) folds into the B30.2/SPRY domain.

It belongs to the TRIM/RBCC family.

Its subcellular location is the cytoplasm. The chain is Tripartite motif-containing protein 16-like protein (TRIM16L) from Homo sapiens (Human).